Reading from the N-terminus, the 210-residue chain is MANASYNVWSPLIRASCLDKKATYLIDPDDFIDKLTLTPYTVFYNGGVLVKISGLRLYMLLTAPPTINEIKNSNFKKRSKRNICMKECVEGKKNVVDMLNNKINMPPCIKKILNDLKENNVPRGGMYRKRFILNCYIANVVSCAKCENRCLIKALTHFYNHDSKCVGEVMHLLIKSQDVYKPPNCQKMKTVDKLCPFAGNCKGLNPICNY.

The protein belongs to the baculoviridae LEF-2 family. Interacts with the DNA primase.

Its subcellular location is the virion. The protein resides in the host nucleus. The protein localises to the host cytoplasm. Plays an essential role in viral DNA replication. Does not seem to participate in the initiation step but is rather important for the amplification of DNA. Also required for expression from the vp39 and polh promoters. The chain is Primase-associated factor LEF-2 (LEF-2) from Autographa californica nuclear polyhedrosis virus (AcMNPV).